The chain runs to 268 residues: MNGLMNGKRGLIMGVANSHSIAWGIAKSLAAQGAELAFTYQGEALGKRVKPLAAEVNSDFLLPCDVEDIGSVDAVVDAIKERWGKLDFVVHAIGFSDKNELKGLYADTTRDNFSRTMVISCFSFTEIAKRAAELMSEGGTMLTLTYGGSMRVMPNYNVMGVAKAALEASVRYLAADYGSRGIRVNAISAGPIRTLAGAGISDARAMLSWQQKNSPLRRTVTIEDVGSSALYLLSDLSRGVTGEIHYVDSGYNITSMPTLEALRVADAD.

NAD(+) contacts are provided by residues G14, 20–21 (SI), Q41, 65–66 (DV), and I93. Catalysis depends on proton acceptor residues Y146 and Y156. NAD(+) is bound by residues K163 and 192-196 (IRTLA).

Belongs to the short-chain dehydrogenases/reductases (SDR) family. FabI subfamily.

It is found in the cell inner membrane. It catalyses the reaction a 2,3-saturated acyl-[ACP] + NAD(+) = a (2E)-enoyl-[ACP] + NADH + H(+). It functions in the pathway lipid metabolism; fatty acid biosynthesis. The chain is Enoyl-[acyl-carrier-protein] reductase [NADH] 2 (fabI2) from Rhizobium meliloti (strain 1021) (Ensifer meliloti).